We begin with the raw amino-acid sequence, 68 residues long: Probable tautomerase Cj0270 (68 aa).

Residue proline 2 is the Proton acceptor; via imino nitrogen of the active site.

The protein belongs to the 4-oxalocrotonate tautomerase family.

The chain is Probable tautomerase Cj0270 from Campylobacter jejuni subsp. jejuni serotype O:2 (strain ATCC 700819 / NCTC 11168).